The chain runs to 142 residues: Transcription antitermination protein NusB (142 aa).

This sequence belongs to the NusB family.

Its function is as follows. Involved in transcription antitermination. Required for transcription of ribosomal RNA (rRNA) genes. Binds specifically to the boxA antiterminator sequence of the ribosomal RNA (rrn) operons. In Roseiflexus castenholzii (strain DSM 13941 / HLO8), this protein is Transcription antitermination protein NusB.